A 427-amino-acid polypeptide reads, in one-letter code: Endothelin-1 receptor (427 aa).

The signal sequence occupies residues 1-20; that stretch reads METFWLRVSFWVALVGGVIS. Residues 21–80 are Extracellular-facing; sequence DNPESYSTNLSIHVDSVTTFRGTELSFVVTTHQPTNLALPSNGSMHNYCPQQTKITSAFK. 2 N-linked (GlcNAc...) asparagine glycosylation sites follow: N29 and N62. Residues 81 to 102 form a helical membrane-spanning segment; it reads YINTVISCTIFIVGMVGNATLL. Topologically, residues 103-112 are cytoplasmic; that stretch reads RIIYQNKCMR. A helical membrane pass occupies residues 113–132; the sequence is NGPNALIASLALGDLIYVVI. Residues 133–159 lie on the Extracellular side of the membrane; it reads DLPINVFKLLAGRWPFEQNDFGVFLCK. C158 and C239 are joined by a disulfide. Residues 160 to 181 traverse the membrane as a helical segment; that stretch reads LFPFLQKSSVGITVLNLCALSV. The Cytoplasmic portion of the chain corresponds to 182 to 205; it reads DRYRAVASWSRVQGIGIPLVTAIE. A helical transmembrane segment spans residues 206–229; that stretch reads IVSIWILSFILAIPEAIGFVMVPF. Topologically, residues 230-256 are extracellular; the sequence is EYKGAQHRTCMLNATSKFMEFYQDVKD. Residues 257-278 form a helical membrane-spanning segment; that stretch reads WWLFGFYFCMPLVCTAIFYTLM. The Cytoplasmic portion of the chain corresponds to 279 to 306; sequence TCEMLNRRNGSLRIALSEHLKQRREVAK. A helical transmembrane segment spans residues 307-328; it reads TVFCLVVIFALCWFPLHLSRIL. Over 329–347 the chain is Extracellular; that stretch reads KKTVYDEMDTNRCELLSFL. Residues 348–372 traverse the membrane as a helical segment; the sequence is LLMDYIGINLATMNSCINPIALYFV. The Cytoplasmic segment spans residues 373–427; the sequence is SKKFKNCFQSCLCCCCYQSKSLMTSVPMNGTSIQWKNPEQNNHNTERSSHKDSIN. Positions 405–415 are enriched in polar residues; the sequence is IQWKNPEQNNH. Positions 405-427 are disordered; it reads IQWKNPEQNNHNTERSSHKDSIN. Basic and acidic residues predominate over residues 416–427; it reads NTERSSHKDSIN. S425 is subject to Phosphoserine.

Belongs to the G-protein coupled receptor 1 family. Endothelin receptor subfamily. EDNRA sub-subfamily. In terms of assembly, interacts with HDAC7 and KAT5.

It is found in the cell membrane. In terms of biological role, receptor for endothelin-1. Mediates its action by association with G proteins that activate a phosphatidylinositol-calcium second messenger system. The rank order of binding affinities for ET-A is: ET1 &gt; ET2 &gt;&gt; ET3. The sequence is that of Endothelin-1 receptor from Ovis aries (Sheep).